Here is a 396-residue protein sequence, read N- to C-terminus: S-arrestin (396 aa).

Residues 375–386 (ARDPLKGELQAE) are compositionally biased toward basic and acidic residues. The disordered stretch occupies residues 375–396 (ARDPLKGELQAEEKEEEEDDEK). The segment covering 387–396 (EKEEEEDDEK) has biased composition (acidic residues).

The protein belongs to the arrestin family. Interacts with RHO (via the phosphorylated C-terminus).

The protein localises to the cell projection. It is found in the cilium. The protein resides in the photoreceptor outer segment. It localises to the membrane. Functionally, binds to photoactivated, phosphorylated RHO and terminates RHO signaling via G-proteins by competing with G-proteins for the same binding site on RHO. May play a role in preventing light-dependent degeneration of retinal photoreceptor cells. The sequence is that of S-arrestin (sag) from Xenopus laevis (African clawed frog).